The following is a 20-amino-acid chain: Bulb protein (20 aa).

The segment at 1 to 20 (APDVHTRXTQNGLPPGXLPS) is disordered.

This Narcissus pseudonarcissus (Daffodil) protein is Bulb protein.